The sequence spans 287 residues: 4-hydroxybenzoate octaprenyltransferase (287 aa).

The next 6 helical transmembrane spans lie at 23–40 (IGSL…WLAG), 98–118 (ILFV…NKMT), 141–161 (LPQF…YAAV), 163–183 (ESLP…TVAY), 213–233 (IIIG…GNIT), and 235–255 (LGIP…YQQI).

The protein belongs to the UbiA prenyltransferase family. It depends on Mg(2+) as a cofactor.

It localises to the cell inner membrane. The catalysed reaction is all-trans-octaprenyl diphosphate + 4-hydroxybenzoate = 4-hydroxy-3-(all-trans-octaprenyl)benzoate + diphosphate. It functions in the pathway cofactor biosynthesis; ubiquinone biosynthesis. Catalyzes the prenylation of para-hydroxybenzoate (PHB) with an all-trans polyprenyl group. Mediates the second step in the final reaction sequence of ubiquinone-8 (UQ-8) biosynthesis, which is the condensation of the polyisoprenoid side chain with PHB, generating the first membrane-bound Q intermediate 3-octaprenyl-4-hydroxybenzoate. In Pectobacterium atrosepticum (strain SCRI 1043 / ATCC BAA-672) (Erwinia carotovora subsp. atroseptica), this protein is 4-hydroxybenzoate octaprenyltransferase.